The chain runs to 447 residues: Alpha-1,3-mannosyl-glycoprotein 2-beta-N-acetylglucosaminyltransferase (447 aa).

Over 1-6 (MLKKQS) the chain is Cytoplasmic. A helical; Signal-anchor for type II membrane protein transmembrane segment spans residues 7–29 (AGLVLWGAIIFVGWNALLLLFFW). The Lumenal portion of the chain corresponds to 30-447 (TRPAPGRLPS…TWNGYDPSWN (418 aa)). Cysteine 115 and cysteine 145 are oxidised to a cystine. The substrate site is built by arginine 117, aspartate 144, histidine 190, and aspartate 212. Aspartate 213 provides a ligand contact to Mn(2+). Cysteine 239 and cysteine 305 form a disulfide bridge. The active-site Proton acceptor is the aspartate 291. Residue serine 322 participates in substrate binding.

This sequence belongs to the glycosyltransferase 13 family. As to quaternary structure, interacts with MGAT4D. Interacts with BRI3. The cofactor is Mn(2+). As to expression, appears to be present in all tissues.

It localises to the golgi apparatus membrane. The protein resides in the cytoplasm. It is found in the perinuclear region. The catalysed reaction is N(4)-(alpha-D-Man-(1-&gt;3)-[alpha-D-Man-(1-&gt;3)-[alpha-D-Man-(1-&gt;6)]-alpha-D-Man-(1-&gt;6)]-beta-D-Man-(1-&gt;4)-beta-D-GlcNAc-(1-&gt;4)-beta-D-GlcNAc)-L-asparaginyl-[protein] (N-glucan mannose isomer 5A1,2) + UDP-N-acetyl-alpha-D-glucosamine = N(4)-{beta-D-GlcNAc-(1-&gt;2)-alpha-D-Man-(1-&gt;3)-[alpha-D-Man-(1-&gt;3)-[alpha-D-Man-(1-&gt;6)]-alpha-D-Man-(1-&gt;6)]-beta-D-Man-(1-&gt;4)-beta-D-GlcNAc-(1-&gt;4)-beta-D-GlcNAc}-L-asparaginyl-[protein] + UDP + H(+). The protein operates within protein modification; protein glycosylation. In terms of biological role, initiates complex N-linked carbohydrate formation. Essential for the conversion of high-mannose to hybrid and complex N-glycans. The chain is Alpha-1,3-mannosyl-glycoprotein 2-beta-N-acetylglucosaminyltransferase (Mgat1) from Rattus norvegicus (Rat).